The chain runs to 152 residues: Ribosome maturation factor RimP (152 aa).

This sequence belongs to the RimP family.

It localises to the cytoplasm. Its function is as follows. Required for maturation of 30S ribosomal subunits. This Pseudoalteromonas atlantica (strain T6c / ATCC BAA-1087) protein is Ribosome maturation factor RimP.